The primary structure comprises 118 residues: Ribosome-binding factor A (118 aa).

This sequence belongs to the RbfA family. As to quaternary structure, monomer. Binds 30S ribosomal subunits, but not 50S ribosomal subunits or 70S ribosomes.

The protein resides in the cytoplasm. In terms of biological role, one of several proteins that assist in the late maturation steps of the functional core of the 30S ribosomal subunit. Associates with free 30S ribosomal subunits (but not with 30S subunits that are part of 70S ribosomes or polysomes). Required for efficient processing of 16S rRNA. May interact with the 5'-terminal helix region of 16S rRNA. The polypeptide is Ribosome-binding factor A (Clostridium beijerinckii (strain ATCC 51743 / NCIMB 8052) (Clostridium acetobutylicum)).